A 503-amino-acid chain; its full sequence is Glycerol kinase (503 aa).

Thr17 lines the ADP pocket. Thr17, Thr18, and Ser19 together coordinate ATP. Thr17 contributes to the sn-glycerol 3-phosphate binding site. Residue Arg21 coordinates ADP. The sn-glycerol 3-phosphate site is built by Arg87, Glu88, Tyr141, and Asp245. Residues Arg87, Glu88, Tyr141, Asp245, and Gln246 each contribute to the glycerol site. Residues Thr267 and Gly310 each contribute to the ADP site. Thr267, Gly310, Gln314, and Gly411 together coordinate ATP. ADP-binding residues include Gly411 and Asn415.

This sequence belongs to the FGGY kinase family.

It carries out the reaction glycerol + ATP = sn-glycerol 3-phosphate + ADP + H(+). It functions in the pathway polyol metabolism; glycerol degradation via glycerol kinase pathway; sn-glycerol 3-phosphate from glycerol: step 1/1. Its activity is regulated as follows. Inhibited by fructose 1,6-bisphosphate (FBP). Its function is as follows. Key enzyme in the regulation of glycerol uptake and metabolism. Catalyzes the phosphorylation of glycerol to yield sn-glycerol 3-phosphate. The protein is Glycerol kinase of Pseudomonas tolaasii.